The following is a 396-amino-acid chain: Calreticulin (396 aa).

Positions 1-15 (MKSLCLLAIVAVVSA) are cleaved as a signal peptide. Cys101 and Cys133 are disulfide-bonded. An alpha-D-glucoside contacts are provided by Tyr105, Lys107, Tyr124, and Asp131. A run of 7 repeats spans residues 186–197 (AQTGSLEEDWDL), 205–216 (DPDAKKPEDWDE), 222–233 (DAEDVKPEDWEK), 239–250 (DPDAKKPEDWDD), 254–264 (GEWEPPMIDNP), 268–278 (GEWKPKQIKNP), and 282–292 (GKWIHPEIENP). The tract at residues 186 to 250 (AQTGSLEEDW…DAKKPEDWDD (65 aa)) is 4 X approximate repeats. The tract at residues 193–301 (EDWDLLPAKK…PEYTPDDELY (109 aa)) is P-domain. A compositionally biased stretch (basic and acidic residues) spans 202–212 (KIKDPDAKKPE). Residues 202–250 (KIKDPDAKKPEDWDEREYIDDAEDVKPEDWEKPEHIPDPDAKKPEDWDD) are disordered. Over residues 213 to 224 (DWDEREYIDDAE) the composition is skewed to acidic residues. Basic and acidic residues predominate over residues 225 to 246 (DVKPEDWEKPEHIPDPDAKKPE). A 3 X approximate repeats region spans residues 254–292 (GEWEPPMIDNPEYKGEWKPKQIKNPAYKGKWIHPEIENP). A C-domain region spans residues 302–396 (LYENWGAIGF…KEEEEGHDEL (95 aa)). Asp312 provides a ligand contact to an alpha-D-glucoside. The span at 342–380 (FDKLKTVEKEKKEKADEEARKVEEEARKKAEEEKEAKKD) shows a compositional bias: basic and acidic residues. The disordered stretch occupies residues 342-396 (FDKLKTVEKEKKEKADEEARKVEEEARKKAEEEKEAKKDDDEEEEKEEEEGHDEL). The span at 381 to 396 (DDEEEEKEEEEGHDEL) shows a compositional bias: acidic residues. Residues 393–396 (HDEL) carry the Prevents secretion from ER motif.

The protein belongs to the calreticulin family.

It localises to the endoplasmic reticulum lumen. Molecular calcium-binding chaperone promoting folding, oligomeric assembly and quality control in the ER via the calreticulin/calnexin cycle. This lectin may interact transiently with almost all of the monoglucosylated glycoproteins that are synthesized in the ER. Probably by controlling the folding of extracellular matrix protein unc-52/Perlecan, may play a role in the formation of fibrous organelles, a hemidesmosome-like structure attaching muscles to the epidermis. Protects dopaminergic neurons against oxidative stress-induced neurodegeneration. The protein is Calreticulin (crt-1) of Caenorhabditis briggsae.